We begin with the raw amino-acid sequence, 542 residues long: MSGSNPAVSINKRKVAPVVLAILDGWGYREEIEHNAVRQASTPVIDALWHAYPHTLIEASGADVGLPDEQMGNSEVGHLTIGAGRIIQQELVRISNTVKENKLITNPALNQFSQSLKKGGGTLHIMGLCSDGGVHSHINHLCGLIEWAASKGLKSVSLHLFTDGRDTSAKSANKYINTIEAKIKSTGVGEISSLCGRYWAMDRDNRWERTSKAYELLTDPRFALSKLSAAESINKSYQEGITDEFIEPVRLSSSFLKDGDGVVFFNFRPDRARQLVKALKLKDFDGFERKNRADIDVLTFTQYESGLPVSVAFPPEPLNDLLGQVISDHGLNQYRTAETEKYPHVTYFLNGGIEKPLKGEVRHLVPSPRVATYDLQPEMSADELTDSCIKAIDSGIYSLVVINFANPDMVGHSGIMTAAIKANEKVDSCVGKLLNSIGKLGGSLLITADHGNSEMMIGPDGQPWTAHTTNPVPVILIEGEKRKLSGYGNDIKLRQSGGGLADLAPTLLHLLNLPKPKAMTGKTLIEPINLPKKPNLIPQPAY.

The Mn(2+) site is built by Asp-24 and Ser-74. Catalysis depends on Ser-74, which acts as the Phosphoserine intermediate. Substrate contacts are provided by residues His-135, 165–166 (RD), Arg-197, Arg-203, 268–271 (RPDR), and Lys-341. Residues Asp-408, His-412, Asp-449, His-450, and His-467 each contribute to the Mn(2+) site.

This sequence belongs to the BPG-independent phosphoglycerate mutase family. As to quaternary structure, monomer. It depends on Mn(2+) as a cofactor.

The enzyme catalyses (2R)-2-phosphoglycerate = (2R)-3-phosphoglycerate. The protein operates within carbohydrate degradation; glycolysis; pyruvate from D-glyceraldehyde 3-phosphate: step 3/5. Functionally, catalyzes the interconversion of 2-phosphoglycerate and 3-phosphoglycerate. The sequence is that of 2,3-bisphosphoglycerate-independent phosphoglycerate mutase from Prochlorococcus marinus (strain NATL1A).